A 181-amino-acid chain; its full sequence is CDP-diacylglycerol--glycerol-3-phosphate 3-phosphatidyltransferase (181 aa).

4 consecutive transmembrane segments (helical) span residues 8–28, 35–55, 64–84, and 148–168; these read PNYLTIARIMVIPVIILAFYI, KLGALLFVLASITDFFDGYIA, FGKMFDPIADKLLIGCVIIML, and IIYLDIVGEIILWIAAFLTII.

It belongs to the CDP-alcohol phosphatidyltransferase class-I family.

It is found in the cell membrane. The enzyme catalyses a CDP-1,2-diacyl-sn-glycerol + sn-glycerol 3-phosphate = a 1,2-diacyl-sn-glycero-3-phospho-(1'-sn-glycero-3'-phosphate) + CMP + H(+). The protein operates within phospholipid metabolism; phosphatidylglycerol biosynthesis; phosphatidylglycerol from CDP-diacylglycerol: step 1/2. Functionally, this protein catalyzes the committed step to the synthesis of the acidic phospholipids. This Rickettsia felis (strain ATCC VR-1525 / URRWXCal2) (Rickettsia azadi) protein is CDP-diacylglycerol--glycerol-3-phosphate 3-phosphatidyltransferase (pgsA).